The sequence spans 239 residues: Venom nerve growth factor (239 aa).

The signal sequence occupies residues 1 to 18 (MSMLCYTLIIAFLIGIWA). The propeptide occupies 19-125 (APKSEDNVPL…ALNRNIQAKR (107 aa)). Residues 47 to 66 (GLKTSRNTDQRHPAPKKADD) are compositionally biased toward basic and acidic residues. The disordered stretch occupies residues 47–68 (GLKTSRNTDQRHPAPKKADDQE). 3 disulfides stabilise this stretch: cysteine 139–cysteine 203, cysteine 181–cysteine 231, and cysteine 191–cysteine 233.

The protein belongs to the NGF-beta family. As to quaternary structure, homodimer; non-covalently linked. In terms of tissue distribution, expressed by the venom gland.

The protein localises to the secreted. In terms of biological role, nerve growth factor is important for the development and maintenance of the sympathetic and sensory nervous systems. It stimulates division and differentiation of sympathetic and embryonic sensory neurons as well as basal forebrain cholinergic neurons in the brain. Its relevance in the snake venom is not clear. However, it has been shown to inhibit metalloproteinase-dependent proteolysis of platelet glycoprotein Ib alpha, suggesting a metalloproteinase inhibition to prevent metalloprotease autodigestion and/or protection against prey proteases. Binds a lipid between the two protein chains in the homodimer. The lipid-bound form promotes histamine relase from mouse mast cells, contrary to the lipid-free form. This Pseudechis porphyriacus (Red-bellied black snake) protein is Venom nerve growth factor.